The primary structure comprises 473 residues: ATP synthase subunit beta (473 aa).

ATP is bound at residue 158-165 (GGAGVGKT).

It belongs to the ATPase alpha/beta chains family. As to quaternary structure, F-type ATPases have 2 components, CF(1) - the catalytic core - and CF(0) - the membrane proton channel. CF(1) has five subunits: alpha(3), beta(3), gamma(1), delta(1), epsilon(1). CF(0) has three main subunits: a(1), b(2) and c(9-12). The alpha and beta chains form an alternating ring which encloses part of the gamma chain. CF(1) is attached to CF(0) by a central stalk formed by the gamma and epsilon chains, while a peripheral stalk is formed by the delta and b chains.

The protein localises to the cell membrane. It catalyses the reaction ATP + H2O + 4 H(+)(in) = ADP + phosphate + 5 H(+)(out). Its function is as follows. Produces ATP from ADP in the presence of a proton gradient across the membrane. The catalytic sites are hosted primarily by the beta subunits. The chain is ATP synthase subunit beta from Bacillus velezensis (strain DSM 23117 / BGSC 10A6 / LMG 26770 / FZB42) (Bacillus amyloliquefaciens subsp. plantarum).